We begin with the raw amino-acid sequence, 130 residues long: Small ribosomal subunit protein uS11c (130 aa).

Belongs to the universal ribosomal protein uS11 family. In terms of assembly, part of the 30S ribosomal subunit.

It localises to the plastid. The protein resides in the chloroplast. The sequence is that of Small ribosomal subunit protein uS11c from Pinus thunbergii (Japanese black pine).